The sequence spans 775 residues: Homoaconitase, mitochondrial (775 aa).

The N-terminal 29 residues, 1–29, are a transit peptide targeting the mitochondrion; it reads MQSRLMPSGGPGRRWAFLRVPSTPQRRAF. 3 residues coordinate [4Fe-4S] cluster: C392, C461, and C464.

Belongs to the aconitase/IPM isomerase family. [4Fe-4S] cluster is required as a cofactor.

It localises to the mitochondrion. The catalysed reaction is (2R,3S)-homoisocitrate = cis-homoaconitate + H2O. It functions in the pathway amino-acid biosynthesis; L-lysine biosynthesis via AAA pathway; L-alpha-aminoadipate from 2-oxoglutarate: step 3/5. In terms of biological role, catalyzes the reversible hydration of cis-homoaconitate to (2R,3S)-homoisocitrate, a step in the alpha-aminoadipate pathway for lysine biosynthesis. This is Homoaconitase, mitochondrial (lys4) from Aspergillus oryzae (strain ATCC 42149 / RIB 40) (Yellow koji mold).